The primary structure comprises 327 residues: Tetraacyldisaccharide 4'-kinase (327 aa).

58–65 contributes to the ATP binding site; it reads TVGGTGKT.

It belongs to the LpxK family.

It catalyses the reaction a lipid A disaccharide + ATP = a lipid IVA + ADP + H(+). The protein operates within glycolipid biosynthesis; lipid IV(A) biosynthesis; lipid IV(A) from (3R)-3-hydroxytetradecanoyl-[acyl-carrier-protein] and UDP-N-acetyl-alpha-D-glucosamine: step 6/6. Functionally, transfers the gamma-phosphate of ATP to the 4'-position of a tetraacyldisaccharide 1-phosphate intermediate (termed DS-1-P) to form tetraacyldisaccharide 1,4'-bis-phosphate (lipid IVA). In Alcanivorax borkumensis (strain ATCC 700651 / DSM 11573 / NCIMB 13689 / SK2), this protein is Tetraacyldisaccharide 4'-kinase.